A 305-amino-acid chain; its full sequence is MRLVFMGTPDFSVPVLEALVAAGHEIACVYSQPPRPAGRGKKDRPSPVQARAEALGLPVRHPVSLRSDEALADFAGLQAEVAVVVAYGLILPQAILDAPTRGCLNIHASLLPRWRGAAPIHRAIMAGDAQTGVCIMQMEAGLDTGPVLAREAVDIGPEETTAQLHDRLSALGAALIVDTLARLDQLEAVPQPEDGVTYAAKIDKAEAQVDWDQPAEDVDRLIRGLSPFPGAWTLLGDTRVKLLGSRIAEASGVPGTVRLNPLRVVCGTGAVELTQVQRAGKAVQSAADFLNGSAIEDGTLFKGKS.

Position 109–112 (109–112) interacts with (6S)-5,6,7,8-tetrahydrofolate; it reads SLLP.

Belongs to the Fmt family.

The catalysed reaction is L-methionyl-tRNA(fMet) + (6R)-10-formyltetrahydrofolate = N-formyl-L-methionyl-tRNA(fMet) + (6S)-5,6,7,8-tetrahydrofolate + H(+). Attaches a formyl group to the free amino group of methionyl-tRNA(fMet). The formyl group appears to play a dual role in the initiator identity of N-formylmethionyl-tRNA by promoting its recognition by IF2 and preventing the misappropriation of this tRNA by the elongation apparatus. The protein is Methionyl-tRNA formyltransferase of Roseobacter denitrificans (strain ATCC 33942 / OCh 114) (Erythrobacter sp. (strain OCh 114)).